A 234-amino-acid chain; its full sequence is Eukaryotic translation initiation factor 3 subunit K (234 aa).

Positions 46 to 219 (SDIEANLALL…EAKPATTTES (174 aa)) constitute a PCI domain.

The protein belongs to the eIF-3 subunit K family. In terms of assembly, component of the eukaryotic translation initiation factor 3 (eIF-3) complex.

It is found in the cytoplasm. Component of the eukaryotic translation initiation factor 3 (eIF-3) complex, which is involved in protein synthesis of a specialized repertoire of mRNAs and, together with other initiation factors, stimulates binding of mRNA and methionyl-tRNAi to the 40S ribosome. The eIF-3 complex specifically targets and initiates translation of a subset of mRNAs involved in cell proliferation. The chain is Eukaryotic translation initiation factor 3 subunit K from Yarrowia lipolytica (strain CLIB 122 / E 150) (Yeast).